The following is a 537-amino-acid chain: MDCRVTHFKEKDSFISKLKESDKSLLEFYQYNPVETASFTTKMKRPNNGREKQLAQIIKDYMADLKLTTSQLEHIEALEQGAKVVIGGQQAGLFGGPLYTFHKILSIVTLSSQLTKEYGETVVPVFWIAGEDHDFDEVNHTYVYNAKEAQLKKVKYHTMTPPETNVSRYTPDKEAMLNALNLFFEELKETNHSKPLYKLCVDIINEFDTWTDIFKALLHAVFKEHGVLLIDAQNDKLRQLEKPLLKQIVTNHSKINQVFRQTQEQTIASGLTQMIQTDTNVHLFLHEDGMRQLISKEDNLFKLSKSDITYSEEELIELIETEPERFSNNVVTRPVMEEWLFNTVAFIGGPSEIKYWAELNNVFKLLNVEMPIVLPRMKMTYMMERTQKLLKQYSLNVEKVIQNGIDDDKNEFVREKASDTFIQQVEELKAKHENVYQQLLNEVKENQDNFNLVTKNEEIHNKQFDYLLKRYLLNIERENDISMRQFRELDLVLHPHHGLQERIWNPLQIMNDFGIDVFSPSTFPPLEYTFDQIIIKP.

A coiled-coil region spans residues 383–451; that stretch reads MERTQKLLKQ…EVKENQDNFN (69 aa).

Belongs to the BshC family.

Functionally, involved in bacillithiol (BSH) biosynthesis. May catalyze the last step of the pathway, the addition of cysteine to glucosamine malate (GlcN-Mal) to generate BSH. The sequence is that of Putative cysteine ligase BshC from Staphylococcus haemolyticus (strain JCSC1435).